We begin with the raw amino-acid sequence, 1894 residues long: Plexin-A4 (1894 aa).

The signal sequence occupies residues 1–23 (MKAMPWNWTCLLSHLLMVGMGSS). Residues 24 to 507 (TLLTRQPAPL…SERQLTRVPV (484 aa)) enclose the Sema domain. The Extracellular portion of the chain corresponds to 24–1237 (TLLTRQPAPL…IAPDSPLSLP (1214 aa)). Disulfide bonds link cysteine 95-cysteine 104, cysteine 130-cysteine 138, cysteine 284-cysteine 405, cysteine 300-cysteine 356, cysteine 374-cysteine 393, cysteine 510-cysteine 527, cysteine 516-cysteine 558, cysteine 519-cysteine 536, cysteine 530-cysteine 542, and cysteine 593-cysteine 612. The PSI 1 domain maps to 509 to 559 (SCGQYQSCGECLGSGDPHCGWCVLHNTCTRKERCERSKEPRRFASEMKQCV). Residue asparagine 655 is glycosylated (N-linked (GlcNAc...) asparagine). PSI domains are found at residues 655-702 (NCSV…EDCP) and 803-856 (KCGA…SKCT). IPT/TIG domains are found at residues 858 to 952 (PRIT…YYFM), 954 to 1037 (LTLS…FQYV), 1040 to 1139 (PTIV…FTYY), and 1142 to 1230 (PVFE…YIAP). N-linked (GlcNAc...) asparagine glycosylation is found at asparagine 1007, asparagine 1132, and asparagine 1180. A helical membrane pass occupies residues 1238–1258 (AIVSIAVAGGLLIIFIVAVLI). Residues 1259–1894 (AYKRKSRESD…QVITLMSLDS (636 aa)) lie on the Cytoplasmic side of the membrane. Lysine 1350 is subject to N6-acetyllysine.

Belongs to the plexin family. In terms of assembly, interacts with NRP1 and NRP2.

It is found in the cell membrane. Its function is as follows. Coreceptor for SEMA3A. Necessary for signaling by class 3 semaphorins and subsequent remodeling of the cytoskeleton. Plays a role in axon guidance in the developing nervous system. Class 3 semaphorins bind to a complex composed of a neuropilin and a plexin. The plexin modulates the affinity of the complex for specific semaphorins, and its cytoplasmic domain is required for the activation of down-stream signaling events in the cytoplasm. The chain is Plexin-A4 (PLXNA4) from Homo sapiens (Human).